Consider the following 1345-residue polypeptide: Probable membrane antigen 75 (1345 aa).

Its subcellular location is the virion tegument. This chain is Probable membrane antigen 75 (75), found in Equine herpesvirus 2 (strain 86/87) (EHV-2).